Reading from the N-terminus, the 168-residue chain is UPF0262 protein BRADO6636 (168 aa).

It belongs to the UPF0262 family.

The chain is UPF0262 protein BRADO6636 from Bradyrhizobium sp. (strain ORS 278).